We begin with the raw amino-acid sequence, 458 residues long: Argininosuccinate lyase (458 aa).

Belongs to the lyase 1 family. Argininosuccinate lyase subfamily.

Its subcellular location is the cytoplasm. The enzyme catalyses 2-(N(omega)-L-arginino)succinate = fumarate + L-arginine. Its pathway is amino-acid biosynthesis; L-arginine biosynthesis; L-arginine from L-ornithine and carbamoyl phosphate: step 3/3. This chain is Argininosuccinate lyase, found in Salmonella dublin (strain CT_02021853).